The sequence spans 129 residues: Methylmalonyl-CoA decarboxylase subunit gamma (129 aa).

2 stretches are compositionally biased toward low complexity: residues 24–39 and 49–58; these read APAA…APAP and PAAAAAPVPA. The segment at 24–58 is disordered; sequence APAAAPKAAPAAAPAPKAAPAPAPAPAAAAAPVPA. Residues 51-129 enclose the Biotinyl-binding domain; that stretch reads AAAAPVPAGA…STGDDMVVLG (79 aa). Residue Lys-95 is modified to N6-biotinyllysine.

The methylmalonyl-CoA decarboxylase is composed of five subunits: the carboxyltransferase alpha subunit (MmdA), the tunnel beta subunit (MmdB), the biotin-containing gamma subunit (MmdC), and the delta (MmdD) and epsilon (MmdE) subunits. The cofactor is biotin.

It is found in the cell membrane. It carries out the reaction (S)-methylmalonyl-CoA + Na(+)(in) + H(+)(out) = propanoyl-CoA + Na(+)(out) + CO2. Its activity is regulated as follows. Completely inhibited by avidin. In terms of biological role, biotin-containing subunit of the sodium ion pump methylmalonyl-CoA decarboxylase, which converts the chemical energy of a decarboxylation reaction into an electrochemical gradient of Na(+) ions across the cytoplasmic membrane, thereby creating a sodium ion motive force that is used for ATP synthesis. Can also convert malonyl-CoA into acetyl-CoA. This is Methylmalonyl-CoA decarboxylase subunit gamma from Veillonella parvula (Staphylococcus parvulus).